The sequence spans 194 residues: Peptidyl-tRNA hydrolase (194 aa).

Tyr-17 is a binding site for tRNA. His-22 functions as the Proton acceptor in the catalytic mechanism. The tRNA site is built by Tyr-68, Asn-70, and Asn-116.

It belongs to the PTH family. Monomer.

The protein localises to the cytoplasm. It catalyses the reaction an N-acyl-L-alpha-aminoacyl-tRNA + H2O = an N-acyl-L-amino acid + a tRNA + H(+). Hydrolyzes ribosome-free peptidyl-tRNAs (with 1 or more amino acids incorporated), which drop off the ribosome during protein synthesis, or as a result of ribosome stalling. In terms of biological role, catalyzes the release of premature peptidyl moieties from peptidyl-tRNA molecules trapped in stalled 50S ribosomal subunits, and thus maintains levels of free tRNAs and 50S ribosomes. This chain is Peptidyl-tRNA hydrolase, found in Pseudomonas syringae pv. tomato (strain ATCC BAA-871 / DC3000).